Consider the following 205-residue polypeptide: Protein N-terminal glutamine amidohydrolase (205 aa).

Active-site residues include Cys28, His81, and Asp97.

It belongs to the NTAQ1 family. In terms of assembly, monomer.

It is found in the cytoplasm. Its subcellular location is the cytosol. It localises to the nucleus. It catalyses the reaction N-terminal L-glutaminyl-[protein] + H2O = N-terminal L-glutamyl-[protein] + NH4(+). In terms of biological role, mediates the side-chain deamidation of N-terminal glutamine residues to glutamate, an important step in N-end rule pathway of protein degradation. Conversion of the resulting N-terminal glutamine to glutamate renders the protein susceptible to arginylation, polyubiquitination and degradation as specified by the N-end rule. Does not act on substrates with internal or C-terminal glutamine and does not act on non-glutamine residues in any position. Does not deaminate acetylated N-terminal glutamine. With the exception of proline, all tested second-position residues on substrate peptides do not greatly influence the activity. In contrast, a proline at position 2, virtually abolishes deamidation of N-terminal glutamine. The polypeptide is Protein N-terminal glutamine amidohydrolase (Homo sapiens (Human)).